A 941-amino-acid polypeptide reads, in one-letter code: Glycine dehydrogenase (decarboxylating) (941 aa).

An N6-(pyridoxal phosphate)lysine modification is found at K692.

This sequence belongs to the GcvP family. In terms of assembly, the glycine cleavage system is composed of four proteins: P, T, L and H. Requires pyridoxal 5'-phosphate as cofactor.

The catalysed reaction is N(6)-[(R)-lipoyl]-L-lysyl-[glycine-cleavage complex H protein] + glycine + H(+) = N(6)-[(R)-S(8)-aminomethyldihydrolipoyl]-L-lysyl-[glycine-cleavage complex H protein] + CO2. Functionally, the glycine cleavage system catalyzes the degradation of glycine. The P protein binds the alpha-amino group of glycine through its pyridoxal phosphate cofactor; CO(2) is released and the remaining methylamine moiety is then transferred to the lipoamide cofactor of the H protein. The chain is Glycine dehydrogenase (decarboxylating) from Mycolicibacterium paratuberculosis (strain ATCC BAA-968 / K-10) (Mycobacterium paratuberculosis).